We begin with the raw amino-acid sequence, 704 residues long: Ribosomal RNA large subunit methyltransferase K/L (704 aa).

This sequence belongs to the methyltransferase superfamily. RlmKL family.

It is found in the cytoplasm. The catalysed reaction is guanosine(2445) in 23S rRNA + S-adenosyl-L-methionine = N(2)-methylguanosine(2445) in 23S rRNA + S-adenosyl-L-homocysteine + H(+). The enzyme catalyses guanosine(2069) in 23S rRNA + S-adenosyl-L-methionine = N(2)-methylguanosine(2069) in 23S rRNA + S-adenosyl-L-homocysteine + H(+). Specifically methylates the guanine in position 2445 (m2G2445) and the guanine in position 2069 (m7G2069) of 23S rRNA. This is Ribosomal RNA large subunit methyltransferase K/L from Alcanivorax borkumensis (strain ATCC 700651 / DSM 11573 / NCIMB 13689 / SK2).